Here is an 888-residue protein sequence, read N- to C-terminus: Dilute domain-containing protein YPR089W (888 aa).

The region spanning Asp-360–Asp-745 is the Dilute domain. Disordered stretches follow at residues Lys-462–Ser-504, Lys-805–Glu-827, and Leu-865–Trp-888. Composition is skewed to polar residues over residues Asn-809–Phe-823 and Ile-867–Asn-880.

It is found in the golgi apparatus. In Saccharomyces cerevisiae (strain ATCC 204508 / S288c) (Baker's yeast), this protein is Dilute domain-containing protein YPR089W.